Reading from the N-terminus, the 252-residue chain is Small ribosomal subunit protein uS2 (252 aa).

It belongs to the universal ribosomal protein uS2 family.

This is Small ribosomal subunit protein uS2 from Ruminiclostridium cellulolyticum (strain ATCC 35319 / DSM 5812 / JCM 6584 / H10) (Clostridium cellulolyticum).